The chain runs to 396 residues: Tryptophan synthase beta chain (396 aa).

Residue Lys86 is modified to N6-(pyridoxal phosphate)lysine.

The protein belongs to the TrpB family. As to quaternary structure, tetramer of two alpha and two beta chains. Pyridoxal 5'-phosphate is required as a cofactor.

It carries out the reaction (1S,2R)-1-C-(indol-3-yl)glycerol 3-phosphate + L-serine = D-glyceraldehyde 3-phosphate + L-tryptophan + H2O. The protein operates within amino-acid biosynthesis; L-tryptophan biosynthesis; L-tryptophan from chorismate: step 5/5. Functionally, the beta subunit is responsible for the synthesis of L-tryptophan from indole and L-serine. The protein is Tryptophan synthase beta chain of Yersinia pseudotuberculosis serotype O:1b (strain IP 31758).